A 400-amino-acid chain; its full sequence is Eukaryotic translation initiation factor 3 subunit M (400 aa).

The region spanning 180 to 354 (LIAKIYSALV…QSFAVHRAQK (175 aa)) is the PCI domain.

This sequence belongs to the eIF-3 subunit M family. As to quaternary structure, component of the eukaryotic translation initiation factor 3 (eIF-3) complex.

It is found in the cytoplasm. Functionally, component of the eukaryotic translation initiation factor 3 (eIF-3) complex, which is involved in protein synthesis of a specialized repertoire of mRNAs and, together with other initiation factors, stimulates binding of mRNA and methionyl-tRNAi to the 40S ribosome. The eIF-3 complex specifically targets and initiates translation of a subset of mRNAs involved in cell proliferation. This Yarrowia lipolytica (strain CLIB 122 / E 150) (Yeast) protein is Eukaryotic translation initiation factor 3 subunit M.